The primary structure comprises 201 residues: B-cell CLL/lymphoma 7 protein family member B-B (201 aa).

The disordered stretch occupies residues 104-201; sequence QSNTKVDSSS…VCTEHNSTVS (98 aa).

Belongs to the BCL7 family.

This chain is B-cell CLL/lymphoma 7 protein family member B-B, found in Danio rerio (Zebrafish).